Reading from the N-terminus, the 455-residue chain is Phosphoglucosamine mutase (455 aa).

Ser-108 acts as the Phosphoserine intermediate in catalysis. Mg(2+) is bound by residues Ser-108, Asp-248, Asp-250, and Asp-252. The residue at position 108 (Ser-108) is a Phosphoserine.

Belongs to the phosphohexose mutase family. It depends on Mg(2+) as a cofactor. Post-translationally, activated by phosphorylation.

The catalysed reaction is alpha-D-glucosamine 1-phosphate = D-glucosamine 6-phosphate. Catalyzes the conversion of glucosamine-6-phosphate to glucosamine-1-phosphate. The polypeptide is Phosphoglucosamine mutase (Leuconostoc mesenteroides subsp. mesenteroides (strain ATCC 8293 / DSM 20343 / BCRC 11652 / CCM 1803 / JCM 6124 / NCDO 523 / NBRC 100496 / NCIMB 8023 / NCTC 12954 / NRRL B-1118 / 37Y)).